The chain runs to 921 residues: Protein translocase subunit SecA (921 aa).

Residues Q85, 103-107 (GEGKT), and D514 each bind ATP. Positions 905, 907, 916, and 917 each coordinate Zn(2+).

It belongs to the SecA family. Monomer and homodimer. Part of the essential Sec protein translocation apparatus which comprises SecA, SecYEG and auxiliary proteins SecDF-YajC and YidC. Requires Zn(2+) as cofactor.

Its subcellular location is the cell inner membrane. It localises to the cytoplasm. The catalysed reaction is ATP + H2O + cellular proteinSide 1 = ADP + phosphate + cellular proteinSide 2.. Functionally, part of the Sec protein translocase complex. Interacts with the SecYEG preprotein conducting channel. Has a central role in coupling the hydrolysis of ATP to the transfer of proteins into and across the cell membrane, serving both as a receptor for the preprotein-SecB complex and as an ATP-driven molecular motor driving the stepwise translocation of polypeptide chains across the membrane. The chain is Protein translocase subunit SecA from Herminiimonas arsenicoxydans.